We begin with the raw amino-acid sequence, 994 residues long: Cation-chloride cotransporter 2 (994 aa).

The segment at 1–28 is disordered; sequence MERGGFGGAGRHDEEAPAMRPAPQQRYR. Over 1–139 the chain is Cytoplasmic; sequence MERGGFGGAG…GHPKETETKL (139 aa). Residues 140–160 form a helical membrane-spanning segment; sequence DTMMGVFVPCLQNILGIIYYI. The Extracellular segment spans residues 161–174; the sequence is RFTWIVGMGGVWQS. A helical membrane pass occupies residues 175–195; sequence LVLVAFCGSCTFLTTISLSAI. At 196–221 the chain is on the cytoplasmic side; sequence ATNGAMKGGGPYYLIGRALGPEVGVS. A helical transmembrane segment spans residues 222-242; sequence IGLCFFLGNAVAGAMYVLGAV. The Extracellular portion of the chain corresponds to 243 to 287; sequence ETFLDAVPSAEFFQESVTVVTNTFVNGTAAGNATTISTPNLHDLQ. N-linked (GlcNAc...) asparagine glycans are attached at residues asparagine 268 and asparagine 274. The helical transmembrane segment at 288 to 308 threads the bilayer; sequence VYGIIVTILLCFIVFGGVKII. The Cytoplasmic segment spans residues 309–311; sequence NKV. The helical transmembrane segment at 312–332 threads the bilayer; the sequence is APAFLIPVLFSILCIYIGVFI. The Extracellular portion of the chain corresponds to 333-372; the sequence is APRPNASKWITGLSITTLKDNWSSDYQRTNNAGVPDPNGS. Residues asparagine 337, asparagine 353, and asparagine 370 are each glycosylated (N-linked (GlcNAc...) asparagine). Residues 373 to 393 traverse the membrane as a helical segment; sequence IYWDFNALLGLYFPAVTGIMA. The Cytoplasmic portion of the chain corresponds to 394–412; sequence GSNRSASLKDTQRSIPIGT. Residues 413–433 traverse the membrane as a helical segment; that stretch reads LHATISTTMMYLLSVFLFGAL. Over 434 to 448 the chain is Extracellular; the sequence is STREGLLTDRLLCAA. A helical membrane pass occupies residues 449–469; it reads VAWPSPAVVYAGIILSTLGAA. At 470–505 the chain is on the cytoplasmic side; sequence LQSLTGAPRLLAAIANDDILPVLNYFKAYEGSEPHV. Residues 506–526 form a helical membrane-spanning segment; it reads ATLFTSFICISCVIIGNLDVI. The Extracellular portion of the chain corresponds to 527 to 529; that stretch reads TPT. Residues 530–552 form a helical membrane-spanning segment; sequence ITMFFLLCYAGVNLSCFLLDLLD. At 553-558 the chain is on the cytoplasmic side; the sequence is APSWRP. A helical transmembrane segment spans residues 559–579; the sequence is RWKLHHWSLSLIGALLCIVIM. Over 580-585 the chain is Extracellular; that stretch reads FMISWT. The helical transmembrane segment at 586–606 threads the bilayer; that stretch reads FTVVSLALASLIYYYVSLKGK. Over 607–994 the chain is Cytoplasmic; it reads AGDWGDGFKS…YRRDVVTLFT (388 aa).

It belongs to the SLC12A transporter family.

It is found in the membrane. Functionally, probable cation/chloride cotransporter. The polypeptide is Cation-chloride cotransporter 2 (CCC2) (Oryza sativa subsp. japonica (Rice)).